The following is a 607-amino-acid chain: Elongation factor 4 (607 aa).

Positions 11–193 (KNIRNFSIIA…KIVEVVPPPE (183 aa)) constitute a tr-type G domain. Residues 23 to 28 (DHGKST) and 140 to 143 (NKID) contribute to the GTP site.

This sequence belongs to the TRAFAC class translation factor GTPase superfamily. Classic translation factor GTPase family. LepA subfamily.

It is found in the cell membrane. The catalysed reaction is GTP + H2O = GDP + phosphate + H(+). Functionally, required for accurate and efficient protein synthesis under certain stress conditions. May act as a fidelity factor of the translation reaction, by catalyzing a one-codon backward translocation of tRNAs on improperly translocated ribosomes. Back-translocation proceeds from a post-translocation (POST) complex to a pre-translocation (PRE) complex, thus giving elongation factor G a second chance to translocate the tRNAs correctly. Binds to ribosomes in a GTP-dependent manner. The protein is Elongation factor 4 of Staphylococcus saprophyticus subsp. saprophyticus (strain ATCC 15305 / DSM 20229 / NCIMB 8711 / NCTC 7292 / S-41).